A 356-amino-acid polypeptide reads, in one-letter code: Histidinol-phosphate aminotransferase (356 aa).

Lys210 is modified (N6-(pyridoxal phosphate)lysine).

This sequence belongs to the class-II pyridoxal-phosphate-dependent aminotransferase family. Histidinol-phosphate aminotransferase subfamily. In terms of assembly, homodimer. Requires pyridoxal 5'-phosphate as cofactor.

The catalysed reaction is L-histidinol phosphate + 2-oxoglutarate = 3-(imidazol-4-yl)-2-oxopropyl phosphate + L-glutamate. Its pathway is amino-acid biosynthesis; L-histidine biosynthesis; L-histidine from 5-phospho-alpha-D-ribose 1-diphosphate: step 7/9. In Acetobacter pasteurianus (Acetobacter turbidans), this protein is Histidinol-phosphate aminotransferase (hisC).